We begin with the raw amino-acid sequence, 169 residues long: MTVRDVRIFGDPVLTSRADEVVDFDESLATLIDDMFDTMEDAGGVGLAANQVGVLRRVFVFDCSHVDGGLRGHVVNPVWEPIGEETQTGKEGCLSIPDVSAETTRYETVKLSGQDRDGNPIGLVASGLLSRCIQHETDHLDGVLFLKRLDPAERKAAMGVIRASDWFNK.

The Fe cation site is built by Cys93 and His135. The active site involves Glu136. His139 serves as a coordination point for Fe cation.

Belongs to the polypeptide deformylase family. Fe(2+) is required as a cofactor.

It catalyses the reaction N-terminal N-formyl-L-methionyl-[peptide] + H2O = N-terminal L-methionyl-[peptide] + formate. In terms of biological role, removes the formyl group from the N-terminal Met of newly synthesized proteins. Requires at least a dipeptide for an efficient rate of reaction. N-terminal L-methionine is a prerequisite for activity but the enzyme has broad specificity at other positions. The sequence is that of Peptide deformylase 1 from Corynebacterium efficiens (strain DSM 44549 / YS-314 / AJ 12310 / JCM 11189 / NBRC 100395).